The sequence spans 467 residues: Fumarate hydratase class II (467 aa).

Substrate is bound by residues 98–100, R126, 129–132, 139–141, and T187; these read SGT, HPND, and SSN. The Proton donor/acceptor role is filled by H188. The active site involves S318. Substrate contacts are provided by residues S319 and 324–326; that span reads KVN.

The protein belongs to the class-II fumarase/aspartase family. Fumarase subfamily. In terms of assembly, homotetramer.

The protein localises to the cytoplasm. The catalysed reaction is (S)-malate = fumarate + H2O. The protein operates within carbohydrate metabolism; tricarboxylic acid cycle; (S)-malate from fumarate: step 1/1. Its function is as follows. Involved in the TCA cycle. Catalyzes the stereospecific interconversion of fumarate to L-malate. This is Fumarate hydratase class II from Escherichia coli O6:H1 (strain CFT073 / ATCC 700928 / UPEC).